Consider the following 101-residue polypeptide: MAKKSMIEREKKRQRLVEKYREKRQQLKAAMADPNIDQATRMELHAQLQKLPRASSPTRLRNRCWKTGRPRGYFRDFGLCRNSLREMAHRGLLPGVVKASW.

It belongs to the universal ribosomal protein uS14 family. As to quaternary structure, part of the 30S ribosomal subunit. Contacts proteins S3 and S10.

In terms of biological role, binds 16S rRNA, required for the assembly of 30S particles and may also be responsible for determining the conformation of the 16S rRNA at the A site. This chain is Small ribosomal subunit protein uS14, found in Synechococcus sp. (strain JA-3-3Ab) (Cyanobacteria bacterium Yellowstone A-Prime).